The sequence spans 1180 residues: Neurexin like receptor 1 (1180 aa).

An N-terminal signal peptide occupies residues 1–20 (MSGLCLVLLLSIFAVSQSSG). Topologically, residues 21–1108 (ECSDVSFSSV…SQNKQDLVSK (1088 aa)) are extracellular. The region spanning 124–290 (PITAFDDSSY…LSPNEVHNQC (167 aa)) is the Laminin G-like 1 domain. Asparagine 229 carries N-linked (GlcNAc...) asparagine glycosylation. Cysteine 267 and cysteine 290 are disulfide-bonded. Residues asparagine 302, asparagine 336, asparagine 355, and asparagine 436 are each glycosylated (N-linked (GlcNAc...) asparagine). The 38-residue stretch at 444–481 (FQEKCLPNPCENGGGCVQSALDDYVCNCKEGYKGKNCH) folds into the EGF-like 1 domain. 3 cysteine pairs are disulfide-bonded: cysteine 448–cysteine 459, cysteine 453–cysteine 469, and cysteine 471–cysteine 480. Asparagine 522 and asparagine 636 each carry an N-linked (GlcNAc...) asparagine glycan. A Laminin G-like 2 domain is found at 695 to 863 (TFDPVTFSNR…GVAIGDDGYC (169 aa)). Residues 859–896 (DDGYCRPDLCQNGGQCVDKYDGYVCDCSMTPFGGSDCT) enclose the EGF-like 2 domain. 3 disulfides stabilise this stretch: cysteine 863-cysteine 874, cysteine 868-cysteine 883, and cysteine 885-cysteine 895. Asparagine 933, asparagine 949, asparagine 978, asparagine 997, asparagine 1011, and asparagine 1052 each carry an N-linked (GlcNAc...) asparagine glycan. Residues 1109–1129 (AIIGGGILALSLFILCMSSLI) form a helical membrane-spanning segment. The Cytoplasmic segment spans residues 1130 to 1180 (CYMRSRPEGVYKTNETGENCSPSRSEEPLVHNTTSNNNNNPTYASNKEYFC). A compositionally biased stretch (polar residues) spans 1142 to 1152 (TNETGENCSPS). The disordered stretch occupies residues 1142–1180 (TNETGENCSPSRSEEPLVHNTTSNNNNNPTYASNKEYFC). Residues 1161-1171 (NTTSNNNNNPT) are compositionally biased toward low complexity.

The protein belongs to the neurexin family. As to quaternary structure, interacts (via the intracellular domain) with F-actin; the interaction is required for anchoring F-actin at the membrane for gap junction formation. Highly expressed in pharyngeal g1 and g2 gland cells, pharyngeal muscle cells and the unilateral GABAergic RIS interneuron (at protein level). Expressed in pm5 pharyngeal muscle cells and the nerve ring.

The protein resides in the cell membrane. Its subcellular location is the cell junction. The protein localises to the gap junction. Required for gap junction formation, playing a role in anchoring the cytoskeletal component F-actin to the membrane of adjacent cells and thus facilitating the formation of gap junction channels in embryonic cells, muscle cells and neuronal cells. Plays a role in maintaining gap junction activity to promote pharyngeal muscle contraction. This is Neurexin like receptor 1 from Caenorhabditis elegans.